A 673-amino-acid chain; its full sequence is Translation factor GUF1 homolog, mitochondrial (673 aa).

Residues 68-260 (ERIRNFSIIA…AVIERIPSPP (193 aa)) form the tr-type G domain. GTP contacts are provided by residues 77 to 84 (AHVDHGKS), 153 to 157 (DTPGH), and 207 to 210 (NKID).

Belongs to the TRAFAC class translation factor GTPase superfamily. Classic translation factor GTPase family. LepA subfamily.

Its subcellular location is the mitochondrion inner membrane. The enzyme catalyses GTP + H2O = GDP + phosphate + H(+). Promotes mitochondrial protein synthesis. May act as a fidelity factor of the translation reaction, by catalyzing a one-codon backward translocation of tRNAs on improperly translocated ribosomes. Binds to mitochondrial ribosomes in a GTP-dependent manner. This is Translation factor GUF1 homolog, mitochondrial from Ricinus communis (Castor bean).